The chain runs to 342 residues: MRSTKVIHIVGCHAEGEVGDVIVGGVAPPPGETVWEQSRFIANDETLRNFVLNKPRGGVFRHVNLLVPPKDPRAQMGFIIMEPADTPPMSGSNSICVSTVLLDSGIIAMQEPVTHMVLEAPGGIIEVEAECRNGKAERISVRNVPSFADRLDAPLDVTGLGTIMVDTAYGGDSFVIVDAAQIGMKIEPGQARELAEIGVKITKAANEQLGFRHPERDWRHISFCQITEPVTREGDVLTGVNTVAIRPAKFDRSPTGTGCSARMAVLHAKGQMKAGERFIGKSVLGTEFHCRLDKVLELGGKPAISPIISGRAWVTGTSQLMLDPSDPFPHGYRLSDTWPRDE.

Ser-90 acts as the Proton acceptor in catalysis. Residues 91-92 (GS), Asp-251, and 256-257 (GT) each bind substrate.

This sequence belongs to the proline racemase family. Homotetramer.

It carries out the reaction trans-4-hydroxy-L-proline = cis-4-hydroxy-D-proline. In terms of biological role, in vitro, catalyzes the epimerization of trans-4-hydroxy-L-proline (t4LHyp) to cis-4-hydroxy-D-proline (c4DHyp) and that of trans-3-hydroxy-L-proline (t3LHyp) to cis-3-hydroxy-D-proline (c3DHyp), albeit with very low efficiency. The physiological substrate may be different. Displays neither proline racemase activity nor t3LHyp dehydratase activity. This Brucella melitensis biotype 1 (strain ATCC 23456 / CCUG 17765 / NCTC 10094 / 16M) protein is Protein BMEI1586.